The sequence spans 488 residues: DNA polymerase processivity factor (488 aa).

3 disordered regions span residues methionine 1 to glutamate 26, serine 331 to serine 453, and proline 469 to proline 488. A compositionally biased stretch (low complexity) spans serine 331–serine 344. The segment covering glutamate 345–aspartate 355 has biased composition (polar residues). A compositionally biased stretch (low complexity) spans alanine 368 to alanine 379. Residues proline 383–threonine 393 are compositionally biased toward polar residues. The Bipartite nuclear localization signal motif lies at lysine 394–lysine 413. The segment covering serine 398–leucine 409 has biased composition (basic and acidic residues). Residues alanine 437–serine 453 show a composition bias toward low complexity.

It belongs to the herpesviridae DNA polymerase processivity factor family. As to quaternary structure, interacts with the DNA polymerase catalytic subunit UL30. Interacts with the origin-binding protein.

Its subcellular location is the host nucleus. Functionally, plays an essential role in viral DNA replication by acting as the polymerase accessory subunit. Associates with the viral polymerase to increase its processivity and forms high-affinity direct interactions with DNA. Facilitates the origin-binding protein UL9 loading onto DNA thus increasing its ability to assemble into a functional complex capable of unwinding duplex DNA. In Homo sapiens (Human), this protein is DNA polymerase processivity factor.